A 345-amino-acid polypeptide reads, in one-letter code: N-acetyl-gamma-glutamyl-phosphate reductase (345 aa).

Cys149 is an active-site residue.

It belongs to the NAGSA dehydrogenase family. Type 1 subfamily.

It is found in the cytoplasm. It catalyses the reaction N-acetyl-L-glutamate 5-semialdehyde + phosphate + NADP(+) = N-acetyl-L-glutamyl 5-phosphate + NADPH + H(+). Its pathway is amino-acid biosynthesis; L-arginine biosynthesis; N(2)-acetyl-L-ornithine from L-glutamate: step 3/4. Its function is as follows. Catalyzes the NADPH-dependent reduction of N-acetyl-5-glutamyl phosphate to yield N-acetyl-L-glutamate 5-semialdehyde. This Marinobacter nauticus (strain ATCC 700491 / DSM 11845 / VT8) (Marinobacter aquaeolei) protein is N-acetyl-gamma-glutamyl-phosphate reductase.